Reading from the N-terminus, the 68-residue chain is C-hordein (68 aa).

2 stretches are compositionally biased toward pro residues: residues 1 to 24 and 33 to 55; these read YPQQ…PQQP and PQQP…PLQP. The interval 1-68 is disordered; that stretch reads YPQQPQPFPQ…YTQQTIWSMV (68 aa). The span at 59-68 shows a compositional bias: polar residues; that stretch reads YTQQTIWSMV.

In terms of tissue distribution, developing endosperm.

Sulfur-poor seed storage protein. The chain is C-hordein from Hordeum vulgare (Barley).